The sequence spans 294 residues: Tetraspanin-15 (294 aa).

The Cytoplasmic segment spans residues 1-23 (MPRGDSEQVRYCARFSYLWLKFS). A helical transmembrane segment spans residues 24 to 44 (LVIYSTVFWLIGGLVLSVGIY). At 45–62 (AEVERQKYKTLESAFLAP) the chain is on the extracellular side. A helical transmembrane segment spans residues 63 to 83 (AIILILLGVVMFIVSFIGVLA). Topologically, residues 84–93 (SLRDNLCLLQ) are cytoplasmic. A helical transmembrane segment spans residues 94 to 114 (AFMYILGICLIIELIGGVVAL). Over 115 to 235 (IFRNQTIDFL…WFTDNYTIMA (121 aa)) the chain is Extracellular. The N-linked (GlcNAc...) asparagine glycan is linked to Asn-118. 4 disulfides stabilise this stretch: Cys-154–Cys-219, Cys-155–Cys-185, Cys-171–Cys-179, and Cys-186–Cys-198. N-linked (GlcNAc...) asparagine glycans are attached at residues Asn-189 and Asn-230. A helical transmembrane segment spans residues 236–256 (GVLLGILLPQFLGVLLTFLYI). Residues 257–294 (TRVEDIITEHSVTDGLLGPGTKAGVEAAGTGCCMCYPI) lie on the Cytoplasmic side of the membrane.

The protein belongs to the tetraspanin (TM4SF) family. Interacts with ADAM10; the interaction influences ADAM10 substrate specificity, endocytosis and turnover. In terms of processing, palmitoylated.

It localises to the cell membrane. It is found in the late endosome membrane. Functionally, part of TspanC8 subgroup, composed of 6 members that interact with the transmembrane metalloprotease ADAM10. This interaction is required for ADAM10 exit from the endoplasmic reticulum and for enzymatic maturation and trafficking to the cell surface as well as substrate specificity. Different TspanC8/ADAM10 complexes have distinct substrates. Promotes ADAM10-mediated cleavage of CDH2. Negatively regulates ligand-induced Notch activity probably by regulating ADAM10 activity. The chain is Tetraspanin-15 (TSPAN15) from Bos taurus (Bovine).